A 225-amino-acid chain; its full sequence is Orotidine 5'-phosphate decarboxylase (225 aa).

Substrate contacts are provided by residues Asp9, Lys31, 58–67, Thr115, Arg176, Gln184, Gly204, and Arg205; that span reads DLKLHDIPNT. Lys60 (proton donor) is an active-site residue.

The protein belongs to the OMP decarboxylase family. Type 1 subfamily. In terms of assembly, homodimer.

It carries out the reaction orotidine 5'-phosphate + H(+) = UMP + CO2. It participates in pyrimidine metabolism; UMP biosynthesis via de novo pathway; UMP from orotate: step 2/2. Its function is as follows. Catalyzes the decarboxylation of orotidine 5'-monophosphate (OMP) to uridine 5'-monophosphate (UMP). The sequence is that of Orotidine 5'-phosphate decarboxylase from Wolbachia sp. subsp. Brugia malayi (strain TRS).